The primary structure comprises 396 residues: Elongation factor Tu (396 aa).

One can recognise a tr-type G domain in the interval Lys10–Glu206. Positions Gly19 to Thr26 are G1. Residue Gly19–Thr26 participates in GTP binding. Residue Thr26 participates in Mg(2+) binding. A G2 region spans residues Gly60–Asn64. Positions Asp81–Gly84 are G3. GTP is bound by residues Asp81–His85 and Asn136–Asp139. A G4 region spans residues Asn136–Asp139. Positions Ser174–Lys176 are G5.

The protein belongs to the TRAFAC class translation factor GTPase superfamily. Classic translation factor GTPase family. EF-Tu/EF-1A subfamily. In terms of assembly, monomer.

It localises to the cytoplasm. The enzyme catalyses GTP + H2O = GDP + phosphate + H(+). Its function is as follows. GTP hydrolase that promotes the GTP-dependent binding of aminoacyl-tRNA to the A-site of ribosomes during protein biosynthesis. In Herminiimonas arsenicoxydans, this protein is Elongation factor Tu.